A 183-amino-acid chain; its full sequence is Ribosome maturation factor RimM (183 aa).

In terms of domain architecture, PRC barrel spans 96-171 (PDEFYDHELE…VALIDPPEGL (76 aa)).

This sequence belongs to the RimM family. In terms of assembly, binds ribosomal protein uS19.

Its subcellular location is the cytoplasm. Functionally, an accessory protein needed during the final step in the assembly of 30S ribosomal subunit, possibly for assembly of the head region. Essential for efficient processing of 16S rRNA. May be needed both before and after RbfA during the maturation of 16S rRNA. It has affinity for free ribosomal 30S subunits but not for 70S ribosomes. The polypeptide is Ribosome maturation factor RimM (Rhodococcus jostii (strain RHA1)).